We begin with the raw amino-acid sequence, 362 residues long: MSTTVLPDTWSRRAKRFEGHAKILAVGTATPANWVDQTTYPDFYFRITNSEHLLEHKEKFRRICNKSKIRKRHLVLTEELLKKNPNLCTYNETSLNTRQDTLVSEVPKLGKEAAMKAIKEWGRPISEITHLVFCTTSGVDMPGADFQLTKLLGLNISVKRLMMYQQGCNAGAAMLRLAKDLAENNKGARVLVVCSEVTLSVFRGPSLQQEDNLLAQCLFGDGSAAVIVGTDPRPGLETPLFELVSSAQTIIPDTDSHLKLHLLEMGLTFHCSKAVPSLITQNVEDCLVKAFEPFGISDWNSIFWILHPGGNAILDRVEERLGLGPEKLRASRDVLSEYGNLTSACVLFILDLVRRKSKKQQQ.

C168 is a catalytic residue.

The protein belongs to the thiolase-like superfamily. Chalcone/stilbene synthases family.

The enzyme catalyses (E)-4-coumaroyl-CoA + 3 malonyl-CoA + 3 H(+) = 2',4,4',6'-tetrahydroxychalcone + 3 CO2 + 4 CoA. It functions in the pathway secondary metabolite biosynthesis; flavonoid biosynthesis. Its function is as follows. The primary product of this enzyme is 4,2',4',6'-tetrahydroxychalcone (also termed naringenin-chalcone or chalcone) which can under specific conditions spontaneously isomerize into naringenin. In Ipomoea platensis (Morning glory), this protein is Chalcone synthase A (CHSA).